Reading from the N-terminus, the 156-residue chain is Small ribosomal subunit protein uS7 (156 aa).

This sequence belongs to the universal ribosomal protein uS7 family. As to quaternary structure, part of the 30S ribosomal subunit. Contacts proteins S9 and S11.

In terms of biological role, one of the primary rRNA binding proteins, it binds directly to 16S rRNA where it nucleates assembly of the head domain of the 30S subunit. Is located at the subunit interface close to the decoding center, probably blocks exit of the E-site tRNA. The protein is Small ribosomal subunit protein uS7 of Polynucleobacter asymbioticus (strain DSM 18221 / CIP 109841 / QLW-P1DMWA-1) (Polynucleobacter necessarius subsp. asymbioticus).